A 250-amino-acid chain; its full sequence is Glycerol uptake facilitator protein-like 5 (250 aa).

Transmembrane regions (helical) follow at residues 12-32 (EFFG…NAFL) and 46-66 (GGWL…AMMF). An NPA 1 motif is present at residues 75–77 (NPA). 3 helical membrane passes run 85 to 105 (IGIF…LGAI), 142 to 162 (LNGF…AMGL), and 172 to 192 (IDIA…SLGG). An NPA 2 motif is present at residues 199–201 (NPA). The helical transmembrane segment at 230-250 (VVAPIVGAVIGIWIYKIFFGL) threads the bilayer.

It belongs to the MIP/aquaporin (TC 1.A.8) family.

The protein resides in the cell membrane. Its function is as follows. Probable transporter that facilitates the transmembrane diffusion of an unknown substrate. Is not permeable to water, dihydroxyacetone, glycerol, urea, H(2)O(2) and D/L-lactic acid. This is Glycerol uptake facilitator protein-like 5 from Lactiplantibacillus plantarum (strain ATCC BAA-793 / NCIMB 8826 / WCFS1) (Lactobacillus plantarum).